Reading from the N-terminus, the 150-residue chain is S-protein homolog 24 (150 aa).

An N-linked (GlcNAc...) asparagine glycan is attached at N122.

The protein belongs to the plant self-incompatibility (S1) protein family.

The protein localises to the secreted. The protein is S-protein homolog 24 of Arabidopsis thaliana (Mouse-ear cress).